The following is a 276-amino-acid chain: Undecaprenyl-diphosphatase 2 (276 aa).

7 helical membrane-spanning segments follow: residues 3–23, 48–68, 92–112, 119–139, 196–216, 225–245, and 255–275; these read IWDIIVAIILGIVEGLTEYAP, AANTFKVVIQLGSILAVAFVF, LSIAQIAVGLVPAAVLGFLFE, LFSVRTVAVGLIAGAVLMLAA, ADFTFIMAIPIMMGASLLSLI, DLLPFFIAGFISAFIVALFVV, and IKLVPFAIYRIVLGLLLFILF.

The protein belongs to the UppP family.

It is found in the cell membrane. The enzyme catalyses di-trans,octa-cis-undecaprenyl diphosphate + H2O = di-trans,octa-cis-undecaprenyl phosphate + phosphate + H(+). In terms of biological role, catalyzes the dephosphorylation of undecaprenyl diphosphate (UPP). Confers resistance to bacitracin. The protein is Undecaprenyl-diphosphatase 2 of Bacillus licheniformis (strain ATCC 14580 / DSM 13 / JCM 2505 / CCUG 7422 / NBRC 12200 / NCIMB 9375 / NCTC 10341 / NRRL NRS-1264 / Gibson 46).